The following is a 513-amino-acid chain: Cytochrome P450 1A2 (513 aa).

An O-linked (GlcNAc) serine glycan is attached at S68. Substrate is bound at residue F225. C456 serves as a coordination point for heme.

The protein belongs to the cytochrome P450 family. Interacts with PGRMC1; the interaction requires PGRMC1 homodimerization. Heme serves as cofactor. In terms of tissue distribution, found in lung and liver.

The protein resides in the endoplasmic reticulum membrane. It is found in the microsome membrane. The enzyme catalyses an organic molecule + reduced [NADPH--hemoprotein reductase] + O2 = an alcohol + oxidized [NADPH--hemoprotein reductase] + H2O + H(+). The catalysed reaction is 17beta-estradiol + reduced [NADPH--hemoprotein reductase] + O2 = 2-hydroxy-17beta-estradiol + oxidized [NADPH--hemoprotein reductase] + H2O + H(+). It carries out the reaction 17beta-estradiol + reduced [NADPH--hemoprotein reductase] + O2 = 4-hydroxy-17beta-estradiol + oxidized [NADPH--hemoprotein reductase] + H2O + H(+). It catalyses the reaction estrone + reduced [NADPH--hemoprotein reductase] + O2 = 2-hydroxyestrone + oxidized [NADPH--hemoprotein reductase] + H2O + H(+). The enzyme catalyses estrone + reduced [NADPH--hemoprotein reductase] + O2 = 4-hydroxyestrone + oxidized [NADPH--hemoprotein reductase] + H2O + H(+). The catalysed reaction is cholesterol + reduced [NADPH--hemoprotein reductase] + O2 = 25-hydroxycholesterol + oxidized [NADPH--hemoprotein reductase] + H2O + H(+). It carries out the reaction all-trans-retinol + reduced [NADPH--hemoprotein reductase] + O2 = all-trans-retinal + oxidized [NADPH--hemoprotein reductase] + 2 H2O + H(+). It catalyses the reaction all-trans-retinal + reduced [NADPH--hemoprotein reductase] + O2 = all-trans-retinoate + oxidized [NADPH--hemoprotein reductase] + H2O + 2 H(+). The enzyme catalyses (5Z,8Z,11Z,14Z)-eicosatetraenoate + reduced [NADPH--hemoprotein reductase] + O2 = (14R,15S)-epoxy-(5Z,8Z,11Z)-eicosatrienoate + oxidized [NADPH--hemoprotein reductase] + H2O + H(+). The catalysed reaction is (5Z,8Z,11Z,14Z)-eicosatetraenoate + reduced [NADPH--hemoprotein reductase] + O2 = (14S,15R)-epoxy-(5Z,8Z,11Z)-eicosatrienoate + oxidized [NADPH--hemoprotein reductase] + H2O + H(+). It carries out the reaction (5Z,8Z,11Z,14Z,17Z)-eicosapentaenoate + reduced [NADPH--hemoprotein reductase] + O2 = (17R,18S)-epoxy-(5Z,8Z,11Z,14Z)-eicosatetraenoate + oxidized [NADPH--hemoprotein reductase] + H2O + H(+). It catalyses the reaction (4Z,7Z,10Z,13Z,16Z,19Z)-docosahexaenoate + reduced [NADPH--hemoprotein reductase] + O2 = (19R,20S)-epoxy-(4Z,7Z,10Z,13Z,16Z)-docosapentaenoate + oxidized [NADPH--hemoprotein reductase] + H2O + H(+). The enzyme catalyses (5S)-hydroperoxy-(6E,8Z,11Z,14Z)-eicosatetraenoate = 5-oxo-(6E,8Z,11Z,14Z)-eicosatetraenoate + H2O. The catalysed reaction is (12S)-hydroperoxy-(5Z,8Z,10E,14Z)-eicosatetraenoate = 12-oxo-(5Z,8Z,10E,14Z)-eicosatetraenoate + H2O. It carries out the reaction (15S)-hydroperoxy-(5Z,8Z,11Z,13E)-eicosatetraenoate = 15-oxo-(5Z,8Z,11Z,13E)-eicosatetraenoate + H2O. It catalyses the reaction (13S)-hydroperoxy-(9Z,11E)-octadecadienoate = 13-oxo-(9Z,11E)-octadecadienoate + H2O. The enzyme catalyses (5Z,8Z,11Z,14Z)-eicosatetraenoate + reduced [NADPH--hemoprotein reductase] + O2 = 13-hydroxy-(5Z,8Z,11Z,14Z)-eicosatetraenoate + oxidized [NADPH--hemoprotein reductase] + H2O + H(+). The catalysed reaction is (5Z,8Z,11Z,14Z)-eicosatetraenoate + reduced [NADPH--hemoprotein reductase] + O2 = 19-hydroxy-(5Z,8Z,11Z,14Z)-eicosatetraenoate + oxidized [NADPH--hemoprotein reductase] + H2O + H(+). It carries out the reaction (9Z,12Z)-octadecadienoate + reduced [NADPH--hemoprotein reductase] + O2 = 11-hydroxy-(9Z,12Z)-octadecadienoate + oxidized [NADPH--hemoprotein reductase] + H2O + H(+). It participates in cofactor metabolism; retinol metabolism. Its pathway is steroid metabolism; cholesterol metabolism. It functions in the pathway lipid metabolism; arachidonate metabolism. Functionally, a cytochrome P450 monooxygenase involved in the metabolism of various endogenous substrates, including fatty acids, steroid hormones and vitamins. Mechanistically, uses molecular oxygen inserting one oxygen atom into a substrate, and reducing the second into a water molecule, with two electrons provided by NADPH via cytochrome P450 reductase (NADPH--hemoprotein reductase). Catalyzes the hydroxylation of carbon-hydrogen bonds. Exhibits high catalytic activity for the formation of hydroxyestrogens from estrone (E1) and 17beta-estradiol (E2), namely 2-hydroxy E1 and E2. Metabolizes cholesterol toward 25-hydroxycholesterol, a physiological regulator of cellular cholesterol homeostasis. May act as a major enzyme for all-trans retinoic acid biosynthesis in the liver. Catalyzes two successive oxidative transformation of all-trans retinol to all-trans retinal and then to the active form all-trans retinoic acid. Primarily catalyzes stereoselective epoxidation of the last double bond of polyunsaturated fatty acids (PUFA), displaying a strong preference for the (R,S) stereoisomer. Catalyzes bisallylic hydroxylation and omega-1 hydroxylation of PUFA. May also participate in eicosanoids metabolism by converting hydroperoxide species into oxo metabolites (lipoxygenase-like reaction, NADPH-independent). Plays a role in the oxidative metabolism of xenobiotics. Catalyzes the N-hydroxylation of heterocyclic amines and the O-deethylation of phenacetin. Metabolizes caffeine via N3-demethylation. The sequence is that of Cytochrome P450 1A2 (CYP1A2) from Mesocricetus auratus (Golden hamster).